The chain runs to 227 residues: Cytochrome c oxidase subunit 2 (227 aa).

Over 1–14 the chain is Mitochondrial intermembrane; the sequence is MAYPLQLGLQDASS. Residues 15–45 traverse the membrane as a helical segment; the sequence is PIMEELMNFHDHTLMIVFLISSLVLYLISLM. Residues 46 to 59 lie on the Mitochondrial matrix side of the membrane; it reads LTTKLIHTSTMDAQ. A helical transmembrane segment spans residues 60-87; the sequence is EVETVWTILPAIILILIALPSLRILYMM. Topologically, residues 88–227 are mitochondrial intermembrane; that stretch reads DEINNPVLTV…LFENWSLSLT (140 aa). The Cu cation site is built by His-161, Cys-196, Glu-198, Cys-200, His-204, and Met-207. Residue Glu-198 participates in Mg(2+) binding.

This sequence belongs to the cytochrome c oxidase subunit 2 family. As to quaternary structure, component of the cytochrome c oxidase (complex IV, CIV), a multisubunit enzyme composed of 14 subunits. The complex is composed of a catalytic core of 3 subunits MT-CO1, MT-CO2 and MT-CO3, encoded in the mitochondrial DNA, and 11 supernumerary subunits COX4I, COX5A, COX5B, COX6A, COX6B, COX6C, COX7A, COX7B, COX7C, COX8 and NDUFA4, which are encoded in the nuclear genome. The complex exists as a monomer or a dimer and forms supercomplexes (SCs) in the inner mitochondrial membrane with NADH-ubiquinone oxidoreductase (complex I, CI) and ubiquinol-cytochrome c oxidoreductase (cytochrome b-c1 complex, complex III, CIII), resulting in different assemblies (supercomplex SCI(1)III(2)IV(1) and megacomplex MCI(2)III(2)IV(2)). Found in a complex with TMEM177, COA6, COX18, COX20, SCO1 and SCO2. Interacts with TMEM177 in a COX20-dependent manner. Interacts with COX20. Interacts with COX16. Cu cation serves as cofactor.

The protein resides in the mitochondrion inner membrane. The enzyme catalyses 4 Fe(II)-[cytochrome c] + O2 + 8 H(+)(in) = 4 Fe(III)-[cytochrome c] + 2 H2O + 4 H(+)(out). In terms of biological role, component of the cytochrome c oxidase, the last enzyme in the mitochondrial electron transport chain which drives oxidative phosphorylation. The respiratory chain contains 3 multisubunit complexes succinate dehydrogenase (complex II, CII), ubiquinol-cytochrome c oxidoreductase (cytochrome b-c1 complex, complex III, CIII) and cytochrome c oxidase (complex IV, CIV), that cooperate to transfer electrons derived from NADH and succinate to molecular oxygen, creating an electrochemical gradient over the inner membrane that drives transmembrane transport and the ATP synthase. Cytochrome c oxidase is the component of the respiratory chain that catalyzes the reduction of oxygen to water. Electrons originating from reduced cytochrome c in the intermembrane space (IMS) are transferred via the dinuclear copper A center (CU(A)) of subunit 2 and heme A of subunit 1 to the active site in subunit 1, a binuclear center (BNC) formed by heme A3 and copper B (CU(B)). The BNC reduces molecular oxygen to 2 water molecules using 4 electrons from cytochrome c in the IMS and 4 protons from the mitochondrial matrix. In Taterillus emini (Emin's gerbil), this protein is Cytochrome c oxidase subunit 2 (MT-CO2).